Consider the following 371-residue polypeptide: Chaperone protein DnaJ (371 aa).

The region spanning 5-70 is the J domain; sequence SYYDILGVSK…KKRQAYDQFG (66 aa). A CR-type zinc finger spans residues 139–217; sequence GREYKIEIPR…CGGQGLQEKR (79 aa). Zn(2+)-binding residues include Cys152, Cys155, Cys169, Cys172, Cys191, Cys194, Cys205, and Cys208. CXXCXGXG motif repeat units follow at residues 152-159, 169-176, 191-198, and 205-212; these read CGDCNGSG, CPDCGGSG, CPTCRGKG, and CKTCGGQG.

The protein belongs to the DnaJ family. Homodimer. The cofactor is Zn(2+).

It localises to the cytoplasm. Participates actively in the response to hyperosmotic and heat shock by preventing the aggregation of stress-denatured proteins and by disaggregating proteins, also in an autonomous, DnaK-independent fashion. Unfolded proteins bind initially to DnaJ; upon interaction with the DnaJ-bound protein, DnaK hydrolyzes its bound ATP, resulting in the formation of a stable complex. GrpE releases ADP from DnaK; ATP binding to DnaK triggers the release of the substrate protein, thus completing the reaction cycle. Several rounds of ATP-dependent interactions between DnaJ, DnaK and GrpE are required for fully efficient folding. Also involved, together with DnaK and GrpE, in the DNA replication of plasmids through activation of initiation proteins. This is Chaperone protein DnaJ from Leptospira borgpetersenii serovar Hardjo-bovis (strain JB197).